We begin with the raw amino-acid sequence, 2185 residues long: Genome polyprotein (2185 aa).

Gly-2 carries N-myristoyl glycine; by host lipidation. Residues Gly-2–Gln-1495 lie on the Cytoplasmic side of the membrane. The tract at residues Phe-566–Val-582 is amphipathic alpha-helix. Active-site for protease 2A activity residues include His-872 and Asp-890. Zn(2+) is bound by residues Cys-907 and Cys-909. The active-site For protease 2A activity is Cys-961. Zn(2+) contacts are provided by Cys-967 and His-969. Residues Asn-1101–Gln-1173 are membrane-binding. The tract at residues Asn-1101–Thr-1239 is oligomerization. The segment at Ala-1122 to Gln-1126 is RNA-binding. The 157-residue stretch at Glu-1205–Asn-1361 folds into the SF3 helicase domain. 3 residues coordinate Zn(2+): Cys-1369, Cys-1381, and Cys-1386. The segment at Cys-1369–Cys-1386 adopts a C4-type; degenerate zinc-finger fold. The segment at Glu-1413–Val-1420 is RNA-binding. An oligomerization region spans residues Leu-1424–Gln-1429. An intramembrane segment occupies Ala-1496 to Tyr-1511. Residues Lys-1512–Phe-2185 are Cytoplasmic-facing. Tyr-1521 is modified (O-(5'-phospho-RNA)-tyrosine). The Peptidase C3 domain occupies Gly-1541–Phe-1719. Residues His-1580, Glu-1611, and Cys-1687 each act as for protease 3C activity in the active site. The RdRp catalytic domain occupies Gly-1950–Leu-2066. 2 residues coordinate Mg(2+): Asp-1956 and Asp-2052.

It belongs to the picornaviruses polyprotein family. As to quaternary structure, interacts with capsid protein VP1 and capsid protein VP3 to form heterotrimeric protomers. In terms of assembly, interacts with capsid protein VP0, and capsid protein VP3 to form heterotrimeric protomers. Five protomers subsequently associate to form pentamers which serve as building blocks for the capsid. Interacts with capsid protein VP2, capsid protein VP3 and capsid protein VP4 following cleavage of capsid protein VP0. Interacts with capsid protein VP1 and capsid protein VP3 in the mature capsid. As to quaternary structure, interacts with capsid protein VP0 and capsid protein VP1 to form heterotrimeric protomers. Five protomers subsequently associate to form pentamers which serve as building blocks for the capsid. Interacts with capsid protein VP4 in the mature capsid. Interacts with protein 2C; this interaction may be important for virion morphogenesis. In terms of assembly, interacts with capsid protein VP1 and capsid protein VP3. Homodimer. As to quaternary structure, homohexamer; forms a hexameric ring structure with 6-fold symmetry characteristic of AAA+ ATPases. Interacts (via N-terminus) with host RTN3 (via reticulon domain); this interaction is important for viral replication. Interacts with capsid protein VP3; this interaction may be important for virion morphogenesis. In terms of assembly, interacts with protein 3CD. Homodimer. Interacts with host GBF1. Interacts (via GOLD domain) with host ACBD3 (via GOLD domain); this interaction allows the formation of a viral protein 3A/ACBD3 heterotetramer with a 2:2 stoichiometry, which will stimulate the recruitment of host PI4KB in order to synthesize PI4P at the viral RNA replication sites. As to quaternary structure, interacts with RNA-directed RNA polymerase. In terms of assembly, interacts with protein 3AB and with RNA-directed RNA polymerase. Interacts with Viral protein genome-linked and with protein 3CD. Requires Mg(2+) as cofactor. Post-translationally, specific enzymatic cleavages in vivo by the viral proteases yield processing intermediates and the mature proteins. In terms of processing, myristoylation is required for the formation of pentamers during virus assembly. Further assembly of 12 pentamers and a molecule of genomic RNA generates the provirion. During virion maturation, immature virions are rendered infectious following cleavage of VP0 into VP4 and VP2. This maturation seems to be an autocatalytic event triggered by the presence of RNA in the capsid and it is followed by a conformational change infectious virion. Post-translationally, myristoylation is required during RNA encapsidation and formation of the mature virus particle. In terms of processing, VPg is uridylylated by the polymerase into VPg-pUpU. This acts as a nucleotide-peptide primer for the genomic RNA replication.

The protein localises to the virion. It is found in the host cytoplasm. Its subcellular location is the host cytoplasmic vesicle membrane. It localises to the host nucleus. It carries out the reaction a ribonucleoside 5'-triphosphate + H2O = a ribonucleoside 5'-diphosphate + phosphate + H(+). The enzyme catalyses Selective cleavage of Tyr-|-Gly bond in the picornavirus polyprotein.. The catalysed reaction is RNA(n) + a ribonucleoside 5'-triphosphate = RNA(n+1) + diphosphate. It catalyses the reaction Selective cleavage of Gln-|-Gly bond in the poliovirus polyprotein. In other picornavirus reactions Glu may be substituted for Gln, and Ser or Thr for Gly.. Replication or transcription is subject to high level of random mutations by the nucleotide analog ribavirin. Forms an icosahedral capsid of pseudo T=3 symmetry with capsid proteins VP2 and VP3. The capsid is 300 Angstroms in diameter, composed of 60 copies of each capsid protein and enclosing the viral positive strand RNA genome. Capsid protein VP1 mainly forms the vertices of the capsid. Capsid protein VP1 interacts with host cell receptor to provide virion attachment to target host cells. This attachment induces virion internalization. Tyrosine kinases are probably involved in the entry process. After binding to its receptor, the capsid undergoes conformational changes. Capsid protein VP1 N-terminus (that contains an amphipathic alpha-helix) and capsid protein VP4 are externalized. Together, they shape a pore in the host membrane through which viral genome is translocated to host cell cytoplasm. Its function is as follows. Forms an icosahedral capsid of pseudo T=3 symmetry with capsid proteins VP2 and VP3. The capsid is 300 Angstroms in diameter, composed of 60 copies of each capsid protein and enclosing the viral positive strand RNA genome. In terms of biological role, lies on the inner surface of the capsid shell. After binding to the host receptor, the capsid undergoes conformational changes. Capsid protein VP4 is released, Capsid protein VP1 N-terminus is externalized, and together, they shape a pore in the host membrane through which the viral genome is translocated into the host cell cytoplasm. Functionally, component of immature procapsids, which is cleaved into capsid proteins VP4 and VP2 after maturation. Allows the capsid to remain inactive before the maturation step. Cysteine protease that cleaves viral polyprotein and specific host proteins. It is responsible for the autocatalytic cleavage between the P1 and P2 regions, which is the first cleavage occurring in the polyprotein. Also cleaves the host translation initiation factor EIF4G1, in order to shut down the capped cellular mRNA translation. Inhibits the host nucleus-cytoplasm protein and RNA trafficking by cleaving host members of the nuclear pores. Counteracts stress granule formation probably by antagonizing its assembly or promoting its dissassembly. Cleaves and inhibits host IFIH1/MDA5, thereby inhibiting the type-I IFN production and the establishment of the antiviral state. Cleaves and inhibits host MAVS, thereby inhibiting the type-I IFN production and the establishment of the antiviral state. Its function is as follows. Plays an essential role in the virus replication cycle by acting as a viroporin. Creates a pore in the host endoplasmic reticulum and as a consequence releases Ca2+ in the cytoplasm of infected cell. In turn, high levels of cytoplasmic calcium may trigger membrane trafficking and transport of viral ER-associated proteins to viroplasms, sites of viral genome replication. In terms of biological role, induces and associates with structural rearrangements of intracellular membranes. Displays RNA-binding, nucleotide binding and NTPase activities. May play a role in virion morphogenesis and viral RNA encapsidation by interacting with the capsid protein VP3. Functionally, localizes the viral replication complex to the surface of membranous vesicles. Together with protein 3CD binds the Cis-Active RNA Element (CRE) which is involved in RNA synthesis initiation. Acts as a cofactor to stimulate the activity of 3D polymerase, maybe through a nucleid acid chaperone activity. Localizes the viral replication complex to the surface of membranous vesicles. It inhibits host cell endoplasmic reticulum-to-Golgi apparatus transport and causes the disassembly of the Golgi complex, possibly through GBF1 interaction. This would result in depletion of MHC, trail receptors and IFN receptors at the host cell surface. Plays an essential role in viral RNA replication by recruiting ACBD3 and PI4KB at the viral replication sites, thereby allowing the formation of the rearranged membranous structures where viral replication takes place. Its function is as follows. Acts as a primer for viral RNA replication and remains covalently bound to viral genomic RNA. VPg is uridylylated prior to priming replication into VPg-pUpU. The oriI viral genomic sequence may act as a template for this. The VPg-pUpU is then used as primer on the genomic RNA poly(A) by the RNA-dependent RNA polymerase to replicate the viral genome. During genome replication, the VPg-RNA linkage is removed by the host TDP2, thereby accelerating replication. During the late stage of the replication cycle, host TDP2 is excluded from sites of viral RNA synthesis and encapsidation, allowing for the generation of progeny virions. In terms of biological role, involved in the viral replication complex and viral polypeptide maturation. It exhibits protease activity with a specificity and catalytic efficiency that is different from protease 3C. Protein 3CD lacks polymerase activity. Protein 3CD binds to the 5'UTR of the viral genome. Functionally, replicates the viral genomic RNA on the surface of intracellular membranes. May form linear arrays of subunits that propagate along a strong head-to-tail interaction called interface-I. Covalently attaches UMP to a tyrosine of VPg, which is used to prime RNA synthesis. The positive stranded RNA genome is first replicated at virus induced membranous vesicles, creating a dsRNA genomic replication form. This dsRNA is then used as template to synthesize positive stranded RNA genomes. ss(+)RNA genomes are either translated, replicated or encapsidated. Major viral protease that mediates proteolytic processing of the polyprotein. Cleaves host EIF5B, contributing to host translation shutoff. Also cleaves host PABPC1, contributing to host translation shutoff. Cleaves host NLRP1, triggers host N-glycine-mediated degradation of the autoinhibitory NLRP1 N-terminal fragment. In Homo sapiens (Human), this protein is Genome polyprotein.